The sequence spans 1098 residues: uncharacterized protein (1098 aa).

This is an uncharacterized protein from Invertebrate iridescent virus 3 (IIV-3).